Reading from the N-terminus, the 402-residue chain is LIM/homeobox protein Lhx5 (402 aa).

2 LIM zinc-binding domains span residues 3 to 61 (AHCA…RRFG) and 62 to 125 (TKCA…ASSL). Disordered stretches follow at residues 133–187 (VSSC…RTTI), 291–335 (NYDF…GHHP), and 365–392 (SGEV…LPHQ). Residues 151–167 (DESKETDHSTSSDKETA) show a composition bias toward basic and acidic residues. A DNA-binding region (homeobox) is located at residues 180–239 (RRGPRTTIKAKQLETLKAAFIATPKPTRHIREQLAQETGLNMRVIQVWFQNRRSKERRMK). A compositionally biased stretch (polar residues) spans 300-319 (PSSQTQSPADSSYLQNSGPG).

In terms of assembly, interacts with ldb1 and with the N-terminus of rnf12.

The protein localises to the nucleus. Functionally, probably involved in the patterning of the nervous system, in particular in the early specification of the diencephalon. The chain is LIM/homeobox protein Lhx5 (lhx5) from Xenopus laevis (African clawed frog).